Reading from the N-terminus, the 170-residue chain is AP-5 complex subunit sigma-1 (170 aa).

As to quaternary structure, probably part of the adaptor protein complex 5 (AP-5) a tetramer composed of AP5B1, AP5M1, AP5S1 and AP5Z1. Interacts with ZFYVE26 and SPG11.

It is found in the cytoplasm. The protein localises to the cytosol. The protein resides in the late endosome membrane. Its subcellular location is the lysosome membrane. In terms of biological role, as part of AP-5, a probable fifth adaptor protein complex it may be involved in endosomal transport. The sequence is that of AP-5 complex subunit sigma-1 (Ap5s1) from Mus musculus (Mouse).